A 535-amino-acid chain; its full sequence is Phosphoenolpyruvate carboxykinase (ATP) (535 aa).

Residues R59, Y201, and K207 each coordinate substrate. Residues K207, H226, and 243-251 each bind ATP; that span reads GLSGTGKTT. Residues K207 and H226 each coordinate Mn(2+). D264 lines the Mn(2+) pocket. ATP-binding positions include E292, R328, 444–445, and T450; that span reads RI. Substrate is bound at residue R328.

This sequence belongs to the phosphoenolpyruvate carboxykinase (ATP) family. Mn(2+) serves as cofactor.

Its subcellular location is the cytoplasm. The catalysed reaction is oxaloacetate + ATP = phosphoenolpyruvate + ADP + CO2. The protein operates within carbohydrate biosynthesis; gluconeogenesis. Its function is as follows. Involved in the gluconeogenesis. Catalyzes the conversion of oxaloacetate (OAA) to phosphoenolpyruvate (PEP) through direct phosphoryl transfer between the nucleoside triphosphate and OAA. The protein is Phosphoenolpyruvate carboxykinase (ATP) of Parabacteroides distasonis (strain ATCC 8503 / DSM 20701 / CIP 104284 / JCM 5825 / NCTC 11152).